The sequence spans 505 residues: Megakaryocyte-associated tyrosine-protein kinase (505 aa).

The 63-residue stretch at 46–108 folds into the SH3 domain; it reads APGTQCMTKC…AAAALRHGEA (63 aa). Residues 120–209 form the SH2 domain; that stretch reads WFHGKISGQE…AICTKLVKPR (90 aa). The Protein kinase domain maps to 233–481; sequence LTLGAQIGEG…IVEKLGRELR (249 aa). ATP-binding positions include 239 to 247 and lysine 260; that span reads IGEGEFGAV. The active-site Proton acceptor is aspartate 350. Positions 483 to 505 are disordered; sequence VGVSAPAGGQEAEGSAPTRSQDP.

The protein belongs to the protein kinase superfamily. Tyr protein kinase family. CSK subfamily. As to quaternary structure, interacts with KIT. As to expression, most abundant in brain, and to a lesser extent in the spleen, the thymus and the liver. Also found in the T-cell lineage.

The protein localises to the cytoplasm. The protein resides in the membrane. It catalyses the reaction L-tyrosyl-[protein] + ATP = O-phospho-L-tyrosyl-[protein] + ADP + H(+). Its function is as follows. Could play a significant role in the signal transduction of hematopoietic cells. May regulate tyrosine kinase activity of SRC-family members in brain by specifically phosphorylating their C-terminal regulatory tyrosine residue which acts as a negative regulatory site. It may play an inhibitory role in the control of T-cell proliferation. The chain is Megakaryocyte-associated tyrosine-protein kinase (Matk) from Mus musculus (Mouse).